The primary structure comprises 146 residues: 3-hydroxyacyl-[acyl-carrier-protein] dehydratase FabZ (146 aa).

His48 is a catalytic residue.

This sequence belongs to the thioester dehydratase family. FabZ subfamily.

The protein localises to the cytoplasm. It carries out the reaction a (3R)-hydroxyacyl-[ACP] = a (2E)-enoyl-[ACP] + H2O. In terms of biological role, involved in unsaturated fatty acids biosynthesis. Catalyzes the dehydration of short chain beta-hydroxyacyl-ACPs and long chain saturated and unsaturated beta-hydroxyacyl-ACPs. In Campylobacter lari (strain RM2100 / D67 / ATCC BAA-1060), this protein is 3-hydroxyacyl-[acyl-carrier-protein] dehydratase FabZ.